A 622-amino-acid polypeptide reads, in one-letter code: Signal recognition particle subunit SRP68 (622 aa).

Positions 576-622 (RDATPKKAAKGSSAAAASSKTSNQEEEEQQGLTGMLSGWKKSFWGNK) are disordered. The segment covering 585 to 595 (KGSSAAAASSK) has biased composition (low complexity).

This sequence belongs to the SRP68 family. In terms of assembly, heterodimer with srpa-72. Srpa-68/srpa-72 heterodimer formation is stabilized by the presence of 7SL RNA. Component of a signal recognition particle (SRP) complex that consists of a 7SL RNA molecule of 300 nucleotides and six protein subunits: srpa-72, srpa-68, SRP54, F37F2.2/SRP19, F25G6.8/SRP14 and ZK512.4/SRP9. Within the SRP complex, interacts (via C-terminus) with srpa-72 (via N-terminus).

The protein localises to the cytoplasm. It localises to the nucleus. The protein resides in the nucleolus. Its subcellular location is the endoplasmic reticulum. Component of the signal recognition particle (SRP) complex, a ribonucleoprotein complex that mediates the cotranslational targeting of secretory and membrane proteins to the endoplasmic reticulum (ER). The SRP complex interacts with the signal sequence in nascent secretory and membrane proteins and directs them to the membrane of the ER. The SRP complex targets the ribosome-nascent chain complex to the SRP receptor (SR), which is anchored in the ER, where SR compaction and GTPase rearrangement drive cotranslational protein translocation into the ER. Binds the signal recognition particle RNA (7SL RNA), srpa-72 binds to this complex subsequently. The SRP complex possibly participates in the elongation arrest function. This is Signal recognition particle subunit SRP68 from Caenorhabditis elegans.